The primary structure comprises 426 residues: uncharacterized protein (426 aa).

The disordered stretch occupies residues 23 to 42; that stretch reads ENPRPTNNPSTSHPSDSYST. Over residues 26 to 42 the composition is skewed to polar residues; that stretch reads RPTNNPSTSHPSDSYST.

Belongs to the serpin family.

This is an uncharacterized protein from Thermococcus kodakarensis (strain ATCC BAA-918 / JCM 12380 / KOD1) (Pyrococcus kodakaraensis (strain KOD1)).